The chain runs to 170 residues: MIIERLIGNLRDLNPLDFSVDYVDLEWFETRKKIARFKTRQGKDIAIRLKDAPKLGLSQGDILFKEEKEIIAVNILDSEVIHIQAKSVAEVAKICYEIGNRHAALYYGESQFEFKTPFEKPTLALLEKLGVQNHVLSSKLDSKDRLTVSMPHSEPNFKVSLASDFKVVMK.

This sequence belongs to the UreE family.

It is found in the cytoplasm. Its function is as follows. Involved in urease metallocenter assembly. Binds nickel. Probably functions as a nickel donor during metallocenter assembly. The chain is Urease accessory protein UreE from Helicobacter pylori (strain Shi470).